The following is a 362-amino-acid chain: S-adenosylmethionine decarboxylase proenzyme (362 aa).

Residues Glu11 and Glu14 contribute to the active site. Ser71 functions as the Schiff-base intermediate with substrate; via pyruvic acid in the catalytic mechanism. Ser71 is modified (pyruvic acid (Ser); by autocatalysis). Cys85 functions as the Proton donor; for catalytic activity in the catalytic mechanism. Residues Ser234 and His247 each act as proton acceptor; for processing activity in the active site.

This sequence belongs to the eukaryotic AdoMetDC family. Pyruvate serves as cofactor. Is synthesized initially as an inactive proenzyme. Formation of the active enzyme involves a self-maturation process in which the active site pyruvoyl group is generated from an internal serine residue via an autocatalytic post-translational modification. Two non-identical subunits are generated from the proenzyme in this reaction, and the pyruvate is formed at the N-terminus of the alpha chain, which is derived from the carboxyl end of the proenzyme. The post-translation cleavage follows an unusual pathway, termed non-hydrolytic serinolysis, in which the side chain hydroxyl group of the serine supplies its oxygen atom to form the C-terminus of the beta chain, while the remainder of the serine residue undergoes an oxidative deamination to produce ammonia and the pyruvoyl group blocking the N-terminus of the alpha chain.

The enzyme catalyses S-adenosyl-L-methionine + H(+) = S-adenosyl 3-(methylsulfanyl)propylamine + CO2. It participates in amine and polyamine biosynthesis; S-adenosylmethioninamine biosynthesis; S-adenosylmethioninamine from S-adenosyl-L-methionine: step 1/1. This Ipomoea nil (Japanese morning glory) protein is S-adenosylmethionine decarboxylase proenzyme (SAMDC).